A 456-amino-acid chain; its full sequence is Glycine--tRNA ligase (456 aa).

2 residues coordinate substrate: arginine 98 and glutamate 168. ATP contacts are provided by residues 200 to 202 (RNE), 210 to 215 (FRTREF), 285 to 286 (EL), and 329 to 332 (GVER). A substrate-binding site is contributed by 215-219 (FEQME). 325-329 (EPSVG) lines the substrate pocket.

It belongs to the class-II aminoacyl-tRNA synthetase family. In terms of assembly, homodimer.

The protein resides in the cytoplasm. It carries out the reaction tRNA(Gly) + glycine + ATP = glycyl-tRNA(Gly) + AMP + diphosphate. Functionally, catalyzes the attachment of glycine to tRNA(Gly). The sequence is that of Glycine--tRNA ligase from Mycoplasma capricolum subsp. capricolum (strain California kid / ATCC 27343 / NCTC 10154).